The primary structure comprises 643 residues: MIKITLKDGSIKEVEAGLSIFEIAQSISQGLARNACCGILNGKVEDLRFIVNEDSSLEICTFDSKEGQHAFNHTASHVLAAAVKRLFPQDKLAIGPSIDNGFYYDFDTEKSFSADQLNKLEEEMKKIIKENPEIKRFELPRNEALELMKDEPYKVELINDLPEGEVISFYQIGDFVDLCAGPHLMAVKPIKAVKLLRSTGAYWKGDEKNKMLSRVYGTAFPKKSELDAYLEALEEAKKRDHNKLGRELGIFTTDENVGQGLPLLMPKGARIIQTLQRWIEDEEQRRGYVLTKTPLMAKSDLYKISGHWDHYKDGMFVLGDEEKDSEVFALRPMTCPFQYAIYNSTQHSYRDLPVRFAETSTLFRNESSGEMHGLIRVRQFTLADGHIVCTPEQLEDEFKNTVDLVKYVMETLGIADDITYRFSKWDPNNTEKYINDPEAWENTQNIMREILNHLNIDFTEADDEAAFYGPKLDIQFKNVHGKEDTIITIQIDFALAERFGMYYIDKDGEKKRPYIIHRSSIGCYERTLAMLIEKYAGALPTWIAPVQAKVLPLSDKYADYANEVVEELRRRGVRVEADHRAEKIGYKIREARLERTPYILVVGEKEAENKEVSVRSRKNGEEGAMPLADFVNRIVLEIANREN.

The TGS domain occupies 1-61 (MIKITLKDGS…NEDSSLEICT (61 aa)). Residues 240 to 540 (DHNKLGRELG…LIEKYAGALP (301 aa)) form a catalytic region. Zn(2+) contacts are provided by Cys-335, His-386, and His-517.

This sequence belongs to the class-II aminoacyl-tRNA synthetase family. Homodimer. The cofactor is Zn(2+).

It is found in the cytoplasm. The enzyme catalyses tRNA(Thr) + L-threonine + ATP = L-threonyl-tRNA(Thr) + AMP + diphosphate + H(+). Functionally, catalyzes the attachment of threonine to tRNA(Thr) in a two-step reaction: L-threonine is first activated by ATP to form Thr-AMP and then transferred to the acceptor end of tRNA(Thr). Also edits incorrectly charged L-seryl-tRNA(Thr). The sequence is that of Threonine--tRNA ligase from Clostridium perfringens (strain SM101 / Type A).